We begin with the raw amino-acid sequence, 323 residues long: Aspartate carbamoyltransferase catalytic subunit (323 aa).

Residues R71 and T72 each coordinate carbamoyl phosphate. L-aspartate is bound at residue K99. R121, H151, and Q154 together coordinate carbamoyl phosphate. Positions 184 and 239 each coordinate L-aspartate. Carbamoyl phosphate-binding residues include G280 and P281.

This sequence belongs to the aspartate/ornithine carbamoyltransferase superfamily. ATCase family. Heterododecamer (2C3:3R2) of six catalytic PyrB chains organized as two trimers (C3), and six regulatory PyrI chains organized as three dimers (R2).

The enzyme catalyses carbamoyl phosphate + L-aspartate = N-carbamoyl-L-aspartate + phosphate + H(+). It functions in the pathway pyrimidine metabolism; UMP biosynthesis via de novo pathway; (S)-dihydroorotate from bicarbonate: step 2/3. Its function is as follows. Catalyzes the condensation of carbamoyl phosphate and aspartate to form carbamoyl aspartate and inorganic phosphate, the committed step in the de novo pyrimidine nucleotide biosynthesis pathway. This is Aspartate carbamoyltransferase catalytic subunit from Cupriavidus taiwanensis (strain DSM 17343 / BCRC 17206 / CCUG 44338 / CIP 107171 / LMG 19424 / R1) (Ralstonia taiwanensis (strain LMG 19424)).